A 561-amino-acid chain; its full sequence is Asparagine synthetase [glutamine-hydrolyzing] (561 aa).

C2 acts as the For GATase activity in catalysis. In terms of domain architecture, Glutamine amidotransferase type-2 spans 2 to 191 (CGIWALFGSD…PGHYEVLDLK (190 aa)). Residues 49 to 53 (RLAVV), 75 to 77 (NGE), and D97 contribute to the L-glutamine site. An Asparagine synthetase domain is found at 213–536 (HAACDTVGNL…PGRSSWLPHY (324 aa)). Residues L256, I288, and 363 to 364 (SG) each bind ATP.

The enzyme catalyses L-aspartate + L-glutamine + ATP + H2O = L-asparagine + L-glutamate + AMP + diphosphate + H(+). It functions in the pathway amino-acid biosynthesis; L-asparagine biosynthesis; L-asparagine from L-aspartate (L-Gln route): step 1/1. The chain is Asparagine synthetase [glutamine-hydrolyzing] (ASNS) from Gallus gallus (Chicken).